The primary structure comprises 492 residues: Gamma-aminobutyric acid receptor subunit alpha-3 (492 aa).

An N-terminal signal peptide occupies residues 1-28; the sequence is MIITQMSQFYMAGLGLLFLINILPGTTG. Over 29 to 274 the chain is Extracellular; that stretch reads QVESRRQEPG…MTTHFHLKRK (246 aa). Asn-63 is a glycosylation site (N-linked (GlcNAc...) asparagine). Residue Arg-119 participates in 4-aminobutanoate binding. N-linked (GlcNAc...) asparagine glycans are attached at residues Asn-163 and Asn-176. Residue Thr-182 coordinates 4-aminobutanoate. The cysteines at positions 191 and 205 are disulfide-linked. The N-linked (GlcNAc...) asparagine glycan is linked to Asn-228. Residues 275–295 form a helical membrane-spanning segment; it reads IGYFVIQTYLPCIMTVILSQV. Residues 296 to 305 lie on the Cytoplasmic side of the membrane; that stretch reads SFWLNRESVP. The helical transmembrane segment at 306–325 threads the bilayer; it reads ARTVFGVTTVLTMTTLSISA. The Extracellular portion of the chain corresponds to 326–336; it reads RNSLPKVAYAT. A helical transmembrane segment spans residues 337–357; it reads AMDWFMAVCYAFVFSALIEFA. At 358 to 457 the chain is on the cytoplasmic side; it reads TVNYFTKRSW…TYNSVSKVDK (100 aa). At Ser-426 the chain carries Phosphoserine. Residue Thr-427 is modified to Phosphothreonine. Ser-433 is subject to Phosphoserine. The helical transmembrane segment at 458-478 threads the bilayer; the sequence is ISRIIFPVLFAIFNLVYWATY. The Extracellular portion of the chain corresponds to 479 to 492; sequence VNRESAIKGMIRKQ.

This sequence belongs to the ligand-gated ion channel (TC 1.A.9) family. Gamma-aminobutyric acid receptor (TC 1.A.9.5) subfamily. GABRA3 sub-subfamily. Heteropentamer, formed by a combination of alpha (GABRA1-6), beta (GABRB1-3), gamma (GABRG1-3), delta (GABRD), epsilon (GABRE), rho (GABRR1-3), pi (GABRP) and theta (GABRQ) chains, each subunit exhibiting distinct physiological and pharmacological properties. Binds UBQLN1. Interacts with GPHN.

The protein localises to the postsynaptic cell membrane. Its subcellular location is the cell membrane. The catalysed reaction is chloride(in) = chloride(out). Its function is as follows. Alpha subunit of the heteropentameric ligand-gated chloride channel gated by gamma-aminobutyric acid (GABA), a major inhibitory neurotransmitter in the brain. GABA-gated chloride channels, also named GABA(A) receptors (GABAAR), consist of five subunits arranged around a central pore and contain GABA active binding site(s) located at the alpha and beta subunit interface(s). When activated by GABA, GABAARs selectively allow the flow of chloride anions across the cell membrane down their electrochemical gradient. Chloride influx into the postsynaptic neuron following GABAAR opening decreases the neuron ability to generate a new action potential, thereby reducing nerve transmission. This is Gamma-aminobutyric acid receptor subunit alpha-3 (GABRA3) from Bos taurus (Bovine).